An 874-amino-acid chain; its full sequence is Alanine--tRNA ligase (874 aa).

The Zn(2+) site is built by histidine 562, histidine 566, cysteine 663, and histidine 667.

It belongs to the class-II aminoacyl-tRNA synthetase family. Requires Zn(2+) as cofactor.

It localises to the cytoplasm. The catalysed reaction is tRNA(Ala) + L-alanine + ATP = L-alanyl-tRNA(Ala) + AMP + diphosphate. Functionally, catalyzes the attachment of alanine to tRNA(Ala) in a two-step reaction: alanine is first activated by ATP to form Ala-AMP and then transferred to the acceptor end of tRNA(Ala). Also edits incorrectly charged Ser-tRNA(Ala) and Gly-tRNA(Ala) via its editing domain. The sequence is that of Alanine--tRNA ligase from Bordetella bronchiseptica (strain ATCC BAA-588 / NCTC 13252 / RB50) (Alcaligenes bronchisepticus).